Reading from the N-terminus, the 258-residue chain is MFDGTTQAQDVAAAFQGEISGKTFVITGVSFGGLGAAVCEALAPYGPGHLIITGRDIQRPQEVAKALIAQYPDLQISVIQMDLALPKSVENAAQEIKKVASRVHVLVNNAGVMCIPDRTLTEKGIEAHLAINYVGHFLLTKLLAEQMSSTDSSPVQGRVINVSSSAHTVSPFRFGDPHFIGSSDLLPDEEPSREACKAFGIPWETSYSPLVAYAQSKTAVILHAKAISSGVLRDGITAFSVNPGGKWNPTILYVLCHC.

NADP(+) contacts are provided by Leu34, Arg59, Asp82, Asn109, and Lys141. The Proton donor role is filled by Ser163. Arg193 is a binding site for NADP(+).

It belongs to the short-chain dehydrogenases/reductases (SDR) family.

It participates in secondary metabolite biosynthesis. Its function is as follows. Oxidoreductase; part of the fragmented gene cluster that mediates the biosynthesis of fusarochromene, a tryptophan-derived metabolite closely related to a group of mycotoxins including fusarochromanone. Within the pathway, fscI catalyzes the formation of the chromene ring from the prenyl moity added by the prenyltransferase fscG. The first step of the pathway is the epimerization of L-tryptophan to D-tryptophan in the presence of the NRPS-like tryptophan epimerase fscC. D-tryptophan is subsequently hydroxylated by the tryptophan 6-hydroxylase fscE to yield 6-hydroxytryptophan. The pyrrole ring undergoes cleavaged by the tryptophan 2,3-dioxygenase fscD and is finally converted to 4-hydroxykyrunenine by the hydrolase fscH. The NRPS-like oxidoreductase fscA reduces the carboxyl group to primary alcohol and the DMATS-type prenyltransferase fscG performs prenylation, followed by the formation of a chromene ring catalyzed by the oxidoreductase fscI, which leads to desacetylfusarochromene. Epoxidation by fscF and rearrangement reactions of chromene double bonds convert compound desacetylfusarochromene to fusarochromanones. Although specific acetyltransferases were not found near the fsc gene cluster, several predicted enzymes containing the N-acetyltransferase superfamily domain are present in the genome of F.equiseti. These predicted enzymes may have the potential to convert desacetylfusarochromene to fusarochromene. In Fusarium equiseti (Fusarium scirpi), this protein is Oxidoreductase fscI.